The sequence spans 440 residues: GTPase Der (440 aa).

EngA-type G domains follow at residues 4–169 and 178–353; these read PVVA…PEED and IKVA…DQAA. Residues 10-17, 57-61, 120-123, 184-191, 231-235, and 296-299 contribute to the GTP site; these read GRPNVGKS, DTGGI, NKVD, GKPNVGKS, DTAGI, and NKWD. The region spanning 354–438 is the KH-like domain; that stretch reads MRISTGVLND…PIKFILREKE (85 aa).

The protein belongs to the TRAFAC class TrmE-Era-EngA-EngB-Septin-like GTPase superfamily. EngA (Der) GTPase family. As to quaternary structure, associates with the 50S ribosomal subunit.

Functionally, GTPase that plays an essential role in the late steps of ribosome biogenesis. This is GTPase Der from Acetivibrio thermocellus (strain ATCC 27405 / DSM 1237 / JCM 9322 / NBRC 103400 / NCIMB 10682 / NRRL B-4536 / VPI 7372) (Clostridium thermocellum).